Here is a 150-residue protein sequence, read N- to C-terminus: Large ribosomal subunit protein bL9 (150 aa).

The protein belongs to the bacterial ribosomal protein bL9 family.

In terms of biological role, binds to the 23S rRNA. The protein is Large ribosomal subunit protein bL9 of Corynebacterium glutamicum (strain ATCC 13032 / DSM 20300 / JCM 1318 / BCRC 11384 / CCUG 27702 / LMG 3730 / NBRC 12168 / NCIMB 10025 / NRRL B-2784 / 534).